The following is a 133-amino-acid chain: uncharacterized protein (133 aa).

This is an uncharacterized protein from Mycobacterium tuberculosis (strain CDC 1551 / Oshkosh).